We begin with the raw amino-acid sequence, 69 residues long: DNA gyrase inhibitor YacG (69 aa).

The disordered stretch occupies residues 1-28 (MSGEGKKHGSNVEPLRPTRPCPECGRPS). Cys-21, Cys-24, Cys-36, and Cys-40 together coordinate Zn(2+).

It belongs to the DNA gyrase inhibitor YacG family. Interacts with GyrB. Zn(2+) is required as a cofactor.

In terms of biological role, inhibits all the catalytic activities of DNA gyrase by preventing its interaction with DNA. Acts by binding directly to the C-terminal domain of GyrB, which probably disrupts DNA binding by the gyrase. The sequence is that of DNA gyrase inhibitor YacG from Sinorhizobium fredii (strain NBRC 101917 / NGR234).